Here is a 222-residue protein sequence, read N- to C-terminus: UPF0758 protein YicR (222 aa).

The MPN domain occupies 100–222 (PLLSPEMTRE…YVSFAERGWI (123 aa)). Residues H171, H173, and D184 each coordinate Zn(2+). Positions 171 to 184 (HNHPSGCAEPSKAD) match the JAMM motif motif.

It belongs to the UPF0758 family. YicR subfamily.

The chain is UPF0758 protein YicR from Escherichia coli (strain 55989 / EAEC).